The following is a 255-amino-acid chain: uncharacterized protein (255 aa).

An N-terminal signal peptide occupies residues 1 to 23 (MKRLNKLVLGISFLFLVISITAG). Cys24 is lipidated: N-palmitoyl cysteine. The S-diacylglycerol cysteine moiety is linked to residue Cys24.

Belongs to the staphylococcal tandem lipoprotein family.

Its subcellular location is the cell membrane. This is an uncharacterized protein from Staphylococcus aureus (strain N315).